Reading from the N-terminus, the 697-residue chain is MIHTKTGSGRRILTFPTVEPSESISIVTLLDSLIQLAGDILTFKSKHFSTNKQSFRETLRRIQNLLVVFEEIRIRIRNSRRYFHDSAAASSLKEIHVGFQKLKFLLEDCTRDGARLCMMMNSDQVSDHLRVLTRSISTSLSAFPVASVDLTTEVNELIDLVVRQARKYGVQPETNDKRAVSSINRILALFVNRVVPDPDEINRILDHVGIRKWGDCVKEINFLGEEIDAERLDEKKKKSSDQVELLSSLMGFICYCRCIILGRIERDDHHNHHEDGIKKDHDLIRGLKVEDLLCPISLEIMTDPVVIETGHTYDRSSITKWFGSGNITCPITGKILTSTELVDNVSVRQVIRKHCKTNGIVLAGISRRRKSHDDVVPESLAAKGAGKLIAKFLTSELINGGEEMIYRAVREIRVQTKTSSFNRSCLVKAGAVTPLLKLLSSVDIRIQENAMAGILNLSKHVTGKSKIAGEGLKILVEILNEGAKTETRLYSASALFYLSSVEDYSRLIGENPDAIPGLMNIVKGDDYGDSAKRSALLAVMGLLMQSDNHWRVLAAGAVPILLDLLRSGEISGGLTADCLATLAKLAEYPDGTIGVIRRGGLKLAVKILSSSEDSPVAVKQHCVGLILNLCLNGGRDVVGVLVKNSLVMGSLYTVLSNGEYGGSKKASALIRMIHEFQERKTGSVEPNLQRGRFVHAW.

The tract at residues 23-210 (SISIVTLLDS…INRILDHVGI (188 aa)) is U-box N-terminal domain (UND) required for EXO70B1 binding and crucial for the negative regulation of ABA-dependent stomatal movement. Positions 287–361 (LKVEDLLCPI…RKHCKTNGIV (75 aa)) constitute a U-box domain. ARM repeat units follow at residues 420 to 459 (SFNR…NLSK), 461 to 500 (VTGK…YLSS), 502 to 544 (EDYS…GLLM), 546 to 587 (SDNH…KLAE), 589 to 631 (PDGT…NLCL), and 657 to 696 (NGEY…FVHA).

In terms of assembly, interacts with EXO70B1 via its U-box N-terminal domain (UND).

It localises to the endomembrane system. The catalysed reaction is S-ubiquitinyl-[E2 ubiquitin-conjugating enzyme]-L-cysteine + [acceptor protein]-L-lysine = [E2 ubiquitin-conjugating enzyme]-L-cysteine + N(6)-ubiquitinyl-[acceptor protein]-L-lysine.. The protein operates within protein modification; protein ubiquitination. Functions as an E3 ubiquitin ligase. Mediates EXO70B1 ubiquitination. Involved in the regulation of abscisic acid (ABA)-mediated stomatal movements. The sequence is that of U-box domain-containing protein 18 from Arabidopsis thaliana (Mouse-ear cress).